The chain runs to 207 residues: Guanylate kinase (207 aa).

A Guanylate kinase-like domain is found at Gly-5 to Ile-185. Residue Gly-12 to Ser-19 coordinates ATP.

The protein belongs to the guanylate kinase family.

It localises to the cytoplasm. It carries out the reaction GMP + ATP = GDP + ADP. In terms of biological role, essential for recycling GMP and indirectly, cGMP. This is Guanylate kinase (gmk) from Campylobacter jejuni subsp. jejuni serotype O:2 (strain ATCC 700819 / NCTC 11168).